Consider the following 589-residue polypeptide: C-type lectin domain family 4 member F (589 aa).

Topologically, residues 1–39 (MDGEAVRFCTDNQCVSLHPQEVDSVAMAPAAPKIPRLVQ) are cytoplasmic. A helical; Signal-anchor for type II membrane protein membrane pass occupies residues 40-60 (ATPAFMAVTLVFSLVTLFVVV). The Extracellular portion of the chain corresponds to 61–589 (QQQTRPVPKP…TPPCPWILSN (529 aa)). Residues Asn79, Asn113, Asn207, Asn230, Asn244, Asn312, Asn385, and Asn399 are each glycosylated (N-linked (GlcNAc...) asparagine). The C-type lectin domain occupies 476 to 589 (NGGSLYYFSS…TPPCPWILSN (114 aa)).

Its subcellular location is the membrane. Its function is as follows. Receptor with an affinity for galactose and fucose. Could be involved in endocytosis. This chain is C-type lectin domain family 4 member F (CLEC4F), found in Homo sapiens (Human).